The chain runs to 324 residues: 4-hydroxy-2-oxoglutarate aldolase, mitochondrial (324 aa).

The N-terminal 22 residues, 1-22, are a transit peptide targeting the mitochondrion; the sequence is MFAHRSFSLLCRRSAVTSWRSQ. 74–75 serves as a coordination point for substrate; that stretch reads SN. The Schiff-base intermediate with substrate role is filled by lysine 193. Substrate-binding residues include serine 195 and glycine 219.

This sequence belongs to the DapA family. Homotetramer.

The protein resides in the mitochondrion. It catalyses the reaction (4S)-4-hydroxy-2-oxoglutarate = glyoxylate + pyruvate. It carries out the reaction (4R)-4-hydroxy-2-oxoglutarate = glyoxylate + pyruvate. With respect to regulation, inhibited by divalent cations. In terms of biological role, catalyzes the final step in the metabolic pathway of hydroxyproline. This chain is 4-hydroxy-2-oxoglutarate aldolase, mitochondrial, found in Danio rerio (Zebrafish).